The primary structure comprises 1482 residues: Type VII secretion system protein EssC (1482 aa).

At 1–229 (MHKLIIKYNK…RPPQPIQKNN (229 aa)) the chain is on the cytoplasmic side. A helical transmembrane segment spans residues 230–252 (TVIWRSIIPPLVMIALTVVIFLV). At 253–256 (RPIG) the chain is on the extracellular side. A helical transmembrane segment spans residues 257-279 (IYILMMIGMSTVTIVFGITTYFS). Topologically, residues 280 to 1482 (EKKKYNKDVE…EYQKIKLMEG (1203 aa)) are cytoplasmic. FtsK domains lie at 652–846 (DDIL…QDSN) and 997–1183 (QGPM…NELT). Residues 672 to 679 (GTTGSGKS) and 1014 to 1021 (GSPGYGRT) each bind ATP.

It belongs to the EssC family. In terms of assembly, homooligomer. Interacts with EsaE.

It is found in the cell membrane. In terms of biological role, component of the type VII secretion system (Ess). Required for the secretion of substrates including EsxA and EsxB. However, unable to support secretion of the substrate protein EsxC. The protein is Type VII secretion system protein EssC of Staphylococcus aureus (strain MRSA252).